The primary structure comprises 501 residues: AKT kinase-transforming protein (501 aa).

Residues 26–129 form the PH domain; that stretch reads AIVKEGWLHK…WATAIQTVAD (104 aa). The segment at 135-158 is disordered; that stretch reads EEETMDFRSGSPSDNSGAEEMEVS. Residues 171-429 enclose the Protein kinase domain; the sequence is FEYLKLLGKG…AKEIMQHRFF (259 aa). Residues 177–185 and K200 each bind ATP; that span reads LGKGTFGKV. The active-site Proton acceptor is D295. A Phosphotyrosine modification is found at Y347. The AGC-kinase C-terminal domain maps to 430–501; sequence ANIVWQDVYE…QFSYSASGTA (72 aa). A disordered region spans residues 471-501; the sequence is TPPDQDDSMECVDSERRPHFPQFSYSASGTA.

Belongs to the protein kinase superfamily. AGC Ser/Thr protein kinase family. RAC subfamily. In terms of assembly, interacts with mouse THEM4. Autophosphorylated on threonine and serine residues.

It catalyses the reaction L-seryl-[protein] + ATP = O-phospho-L-seryl-[protein] + ADP + H(+). It carries out the reaction L-threonyl-[protein] + ATP = O-phospho-L-threonyl-[protein] + ADP + H(+). In Mus musculus (Mouse), this protein is AKT kinase-transforming protein (V-AKT).